A 299-amino-acid polypeptide reads, in one-letter code: Arginase (299 aa).

Residues H99, D122, H124, and D126 each contribute to the Mn(2+) site. Residues 124–128, 135–137, and D178 contribute to the substrate site; these read HGDVN and SGN. Mn(2+) contacts are provided by D226 and D228. 2 residues coordinate substrate: T240 and E271.

Belongs to the arginase family. Homohexamer. Mn(2+) is required as a cofactor.

It catalyses the reaction L-arginine + H2O = urea + L-ornithine. It participates in nitrogen metabolism; urea cycle; L-ornithine and urea from L-arginine: step 1/1. Functionally, controls arginine catabolism. The chain is Arginase (rocF) from Bacillus caldovelox.